The sequence spans 316 residues: Polyprenyl transferase prhE (316 aa).

A run of 9 helical transmembrane segments spans residues Val-45–Leu-65, Val-69–Ile-89, Gly-114–Pro-134, Ser-135–Lys-155, Leu-163–Pro-183, Ile-188–Tyr-208, Ile-231–Leu-253, Gly-257–Leu-276, and Ser-296–Leu-316.

It belongs to the UbiA prenyltransferase family. It depends on Mg(2+) as a cofactor.

The protein resides in the membrane. It carries out the reaction 3,5-dimethylorsellinate + (2E,6E)-farnesyl diphosphate = (3R)-3-farnesyl-6-hydroxy-2,3,5-trimethyl-4-oxocyclohexa-1,5-diene-1-carboxylate + diphosphate + H(+). Its pathway is secondary metabolite biosynthesis; terpenoid biosynthesis. Polyprenyl transferase; part of the gene cluster that mediates the biosynthesis of paraherquonin, a meroterpenoid with a unique, highly congested hexacyclic molecular architecture. The first step of the pathway is the synthesis of 3,5-dimethylorsellinic acid (DMOA) by the polyketide synthase prhL. Synthesis of DMOA is followed by farnesylation by the prenyltransferase prhE, methylesterification by the methyl-transferase prhM, epoxidation of the prenyl chain by the flavin-dependent monooxygenase prhF, and cyclization of the farnesyl moiety by the terpene cyclase prhH, to yield the tetracyclic intermediate, protoaustinoid A. The short chain dehydrogenase prhI then oxidizes the C-3 alcohol group of the terpene cyclase product to transform protoaustinoid A into protoaustinoid B. The FAD-binding monooxygenase prhJ catalyzes the oxidation of protoaustinoid B into preaustinoid A which is further oxidized into preaustinoid A1 by FAD-binding monooxygenase phrK. Finally, prhA leads to berkeleydione via the berkeleyone B intermediate. PrhA is a multifunctional dioxygenase that first desaturates at C5-C6 to form berkeleyone B, followed by rearrangement of the A/B-ring to form the cycloheptadiene moiety in berkeleydione. Berkeleydione serves as the key intermediate for the biosynthesis of paraherquonin as well as many other meroterpenoids. The cytochrome P450 monooxygenases prhB, prhD, and prhN, as well as the isomerase prhC, are probably involved in the late stage of paraherquonin biosynthesis, after the production of berkeleydione. Especially prhC might be a multifunctional enzyme that catalyzes the D-ring expansion via intramolecular methoxy rearrangement, as well as the hydrolysis of the expanded D-ring. The polypeptide is Polyprenyl transferase prhE (Penicillium brasilianum).